The chain runs to 116 residues: Large ribosomal subunit protein bL19 (116 aa).

It belongs to the bacterial ribosomal protein bL19 family.

Its function is as follows. This protein is located at the 30S-50S ribosomal subunit interface and may play a role in the structure and function of the aminoacyl-tRNA binding site. In Staphylococcus epidermidis (strain ATCC 35984 / DSM 28319 / BCRC 17069 / CCUG 31568 / BM 3577 / RP62A), this protein is Large ribosomal subunit protein bL19.